The primary structure comprises 303 residues: Putative deoxyribose-phosphate aldolase (303 aa).

Asp-157 acts as the Proton donor/acceptor in catalysis. The active-site Schiff-base intermediate with acetaldehyde is the Lys-220. Residue Lys-256 is the Proton donor/acceptor of the active site.

It belongs to the DeoC/FbaB aldolase family. DeoC type 2 subfamily.

It catalyses the reaction 2-deoxy-D-ribose 5-phosphate = D-glyceraldehyde 3-phosphate + acetaldehyde. It functions in the pathway carbohydrate degradation; 2-deoxy-D-ribose 1-phosphate degradation; D-glyceraldehyde 3-phosphate and acetaldehyde from 2-deoxy-alpha-D-ribose 1-phosphate: step 2/2. Its function is as follows. Catalyzes a reversible aldol reaction between acetaldehyde and D-glyceraldehyde 3-phosphate to generate 2-deoxy-D-ribose 5-phosphate. The sequence is that of Putative deoxyribose-phosphate aldolase from Caenorhabditis elegans.